A 1835-amino-acid polypeptide reads, in one-letter code: MTVSSDTTAEISLGWSIQDWIDFHKSSSSQASLRLLESLLDSQNVAPVDNAWISLISKENLLHQFQILKSRENKETLPLYGVPIAVKDNIDVRGLPTTAACPSFAYEPSKDSKVVELLRNAGAIIVGKTNLDQFATGLVGTRSPYGKTPCAFSKEHVSGGSSAGSASVVARGIVPIALGTDTAGSGRVPAALNNLIGLKPTKGVFSCQGVVPACKSLDCVSIFALNLSDAERCFRIMCQPDPDNDEYSRPYVSNPLKKFSSNVTIAIPKNIPWYGETKNPVLFSNAVENLSRTGANVIEIDFEPLLELARCLYEGTWVAERYQAIQSFLDSKPPKESLDPTVISIIEGAKKYSAVDCFSFEYKRQGILQKVRRLLESVDVLCVPTCPLNPTMQQVADEPVLVNSRQGTWTNFVNLADLAALAVPAGFRDDGLPNGITLIGKKFTDYALLELANRYFQNIFPNGSRTYGTFTSSSVKPANDQLVGPDYDPSTSIKLAVVGAHLKGLPLHWQLEKVNATYLCTTKTSKAYQLFALPKNGPVLKPGLRRVQDSNGSQIELEVYSVPKELFGAFISMVPEPLGIGSVELESGEWIKSFICEESGYKAKGTVDITKYGGFRAYFEMLKKKESQKKKLFDTVLIANRGEIAVRIIKTLKKLGIRSVAVYSDPDKYSQHVTDADVSVPLHGTTAAQTYLDMNKIIDAAKQTNAQAIIPGYGFLSENADFSDACTSAGITFVGPSGDIIRGLGLKHSARQIAQKAGVPLVPGSLLITSVEEAKKVAAELEYPVMVKSTAGGGGIGLQKVDSEEDIEHIFETVKHQGETFFGDAGVFLERFIENARHVEVQLMGDGFGKAIALGERDCSLQRRNQKVIEETPAPNLPEKTRLALRKAAESLGSLLNYKCAGTVEFIYDEKKDEFYFLEVNTRLQVEHPITEMVTGLDLVEWMIRIAANDAPDFDSTKVEVNGVSMEARLYAENPLKNFRPSPGLLVDVKFPDWARVDTWVKKGTNISPEYDPTLAKIIVHGKDRDDAISKLNQALEETKVYGCITNIDYLKSIITSDFFAKAKVSTNILNSYQYEPTAIEITLPGAHTSIQDYPGRVGYWRIGVPPSGPMDAYSFRLANRIVGNDYRTPAIEVTLTGPSIVFHCETVIAITGGTALCTLDGQEIPQHKPVEVKRGSTLSIGKLTSGCRAYLGIRGGIDVPKYLGSYSTFTLGNVGGYNGRVLKLGDVLFLPSNEENKSVECLPQNIPQSLIPQISETKEWRIGVTCGPHGSPDFFKPESIEEFFSEKWKVHYNSNRFGVRLIGPKPKWARSNGGEGGMHPSNTHDYVYSLGAINFTGDEPVIITCDGPSLGGFVCQAVVPEAELWKVGQVKPGDSIQFVPLSYESSRSLKESQDVAIKSLDGTKLRRLDSVSILPSFETPILAQMEKVNELSPKVVYRQAGDRYVLVEYGDNEMNFNISYRIECLISLVKKNKTIGIVEMSQGVRSVLIEFDGYKVTQKELLKVLVAYETEIQFDENWKITSNIIRLPMAFEDSKTLACVQRYQETIRSSAPWLPNNVDFIANVNGISRNEVYDMLYSARFMVLGLGDVFLGSPCAVPLDPRHRFLGSKYNPSRTYTERGAVGIGGMYMCIYAANSPGGYQLVGRTIPIWDKLCLAASSEVPWLMNPFDQVEFYPVSEEDLDKMTEDCDNGVYKVNIEKSVFDHQEYLRWINANKDSITAFQEGQLGERAEEFAKLIQNANSELKESVTVKPDEEEDFPEGAEIVYSEYSGRFWKSIASVGDVIEAGQGLLIIEAMKAEMIISAPKSGKIIKICHGNGDMVDSGDIVAVIETLA.

ATP-binding positions include 122–129 (GAIIVGKT) and Lys747. The Biotin carboxylation domain maps to 632–1075 (LFDTVLIANR…STNILNSYQY (444 aa)). In terms of domain architecture, ATP-grasp spans 751 to 948 (RQIAQKAGVP…LVEWMIRIAA (198 aa)). Ser803 is subject to Phosphoserine. ATP-binding residues include Glu830 and Asn865. The Biotinyl-binding domain occupies 1754 to 1832 (DEEEDFPEGA…DSGDIVAVIE (79 aa)). At Lys1798 the chain carries N6-biotinyllysine.

In terms of assembly, monomer. Biotin serves as cofactor.

The enzyme catalyses urea + hydrogencarbonate + ATP = urea-1-carboxylate + ADP + phosphate + H(+). It catalyses the reaction urea-1-carboxylate + H2O + 3 H(+) = 2 NH4(+) + 2 CO2. It functions in the pathway nitrogen metabolism; urea degradation; CO(2) and NH(3) from urea (allophanate route): step 1/2. It participates in nitrogen metabolism; urea degradation; CO(2) and NH(3) from urea (allophanate route): step 2/2. Its function is as follows. Hydrolysis of urea to ammonia and CO(2). This is Urea amidolyase (DUR1,2) from Saccharomyces cerevisiae (strain ATCC 204508 / S288c) (Baker's yeast).